A 203-amino-acid chain; its full sequence is GTP-binding protein ypt1 (203 aa).

Residues 15–23 (GDSGVGKSC), 33–40 (YTESYIST), 63–67 (DTAGQ), 121–124 (NKSD), and 151–153 (SAK) contribute to the GTP site. The Effector region signature appears at 37 to 45 (YISTIGVDF). The interval 180–203 (NNTKASVNVSPGHGVSNNSSGGCC) is disordered. 2 S-geranylgeranyl cysteine lipidation sites follow: C202 and C203.

This sequence belongs to the small GTPase superfamily. Rab family.

It is found in the endoplasmic reticulum membrane. Its subcellular location is the golgi apparatus membrane. The protein resides in the cytoplasm. The protein localises to the preautophagosomal structure membrane. Its activity is regulated as follows. Rab activation is generally mediated by a guanine exchange factor (GEF), while inactivation through hydrolysis of bound GTP is catalyzed by a GTPase activating protein (GAP). Functionally, the small GTPases Rab are key regulators of intracellular membrane trafficking, from the formation of transport vesicles to their fusion with membranes. Rabs cycle between an inactive GDP-bound form and an active GTP-bound form that is able to recruit to membranes different set of downstream effectors directly responsible for vesicle formation, movement, tethering and fusion. Ypt-1 regulates the trafficking of secretory vesicles from the endoplasmic reticulum (ER) to the Golgi. Plays a role in the initial events of the autophagic vacuole development which take place at specialized regions of the endoplasmic reticulum. Also involved in the recycling of membrane proteins. This chain is GTP-binding protein ypt1 (ypt-1), found in Neurospora crassa (strain ATCC 24698 / 74-OR23-1A / CBS 708.71 / DSM 1257 / FGSC 987).